We begin with the raw amino-acid sequence, 168 residues long: Crossover junction endodeoxyribonuclease RuvC (168 aa).

Residues Asp-9, Glu-70, and Asp-145 contribute to the active site. The Mg(2+) site is built by Asp-9, Glu-70, and Asp-145.

Belongs to the RuvC family. Homodimer which binds Holliday junction (HJ) DNA. The HJ becomes 2-fold symmetrical on binding to RuvC with unstacked arms; it has a different conformation from HJ DNA in complex with RuvA. In the full resolvosome a probable DNA-RuvA(4)-RuvB(12)-RuvC(2) complex forms which resolves the HJ. Requires Mg(2+) as cofactor.

The protein resides in the cytoplasm. The catalysed reaction is Endonucleolytic cleavage at a junction such as a reciprocal single-stranded crossover between two homologous DNA duplexes (Holliday junction).. In terms of biological role, the RuvA-RuvB-RuvC complex processes Holliday junction (HJ) DNA during genetic recombination and DNA repair. Endonuclease that resolves HJ intermediates. Cleaves cruciform DNA by making single-stranded nicks across the HJ at symmetrical positions within the homologous arms, yielding a 5'-phosphate and a 3'-hydroxyl group; requires a central core of homology in the junction. The consensus cleavage sequence is 5'-(A/T)TT(C/G)-3'. Cleavage occurs on the 3'-side of the TT dinucleotide at the point of strand exchange. HJ branch migration catalyzed by RuvA-RuvB allows RuvC to scan DNA until it finds its consensus sequence, where it cleaves and resolves the cruciform DNA. This chain is Crossover junction endodeoxyribonuclease RuvC, found in Chlamydia caviae (strain ATCC VR-813 / DSM 19441 / 03DC25 / GPIC) (Chlamydophila caviae).